The following is a 350-amino-acid chain: Secreted effector protein PipB2 (350 aa).

4 Pentapeptide repeat domains span residues 162 to 201, 202 to 241, 247 to 286, and 287 to 326; these read ANLT…NLSG, TSLG…SLLG, CNCS…IMED, and AVLT…TLTH.

In terms of assembly, interacts with the host kinesin light chain (KLC), a subunit of the kinesin-1 motor complex.

It is found in the secreted. Its subcellular location is the host membrane. Its function is as follows. Effector proteins function to alter host cell physiology and promote bacterial survival in host tissues. Involved in the reorganization of late endosome/lysosome (LE/Lys) compartments in mammalian cells. Necessary and sufficient to link kinesin-1 onto the Salmonella-containing vacuole (SCV) membrane. Required for centrifugal extension of lysosomal glycoprotein-rich membrane tubules, known as Salmonella-induced filaments (Sifs), away from the SCV and toward the cell periphery. Required for virulence, but not for intracellular survival and replication in phagocytic cells. This chain is Secreted effector protein PipB2 (pipB2), found in Salmonella choleraesuis (strain SC-B67).